Reading from the N-terminus, the 131-residue chain is Bacteriohemerythrin (131 aa).

7 residues coordinate Fe cation: His-22, His-58, Glu-62, His-77, His-81, His-117, and Asp-122.

Belongs to the hemerythrin family. Monomer.

Functionally, oxygen-binding protein. May be involved in a storage mechanism or for delivery to oxygen-requiring enzymes. The oxygen-binding site contains two iron atoms. This chain is Bacteriohemerythrin, found in Methylococcus capsulatus (strain ATCC 33009 / NCIMB 11132 / Bath).